A 223-amino-acid chain; its full sequence is Triosephosphate isomerase (223 aa).

Residue 10 to 12 (NFK) participates in substrate binding. His94 functions as the Electrophile in the catalytic mechanism. The active-site Proton acceptor is Glu142. Residues Ile147, Gly182, and 203–204 (AS) contribute to the substrate site.

Belongs to the triosephosphate isomerase family. In terms of assembly, homotetramer; dimer of dimers.

The protein resides in the cytoplasm. The enzyme catalyses D-glyceraldehyde 3-phosphate = dihydroxyacetone phosphate. Its pathway is carbohydrate biosynthesis; gluconeogenesis. The protein operates within carbohydrate degradation; glycolysis; D-glyceraldehyde 3-phosphate from glycerone phosphate: step 1/1. In terms of biological role, involved in the gluconeogenesis. Catalyzes stereospecifically the conversion of dihydroxyacetone phosphate (DHAP) to D-glyceraldehyde-3-phosphate (G3P). The protein is Triosephosphate isomerase of Archaeoglobus fulgidus (strain ATCC 49558 / DSM 4304 / JCM 9628 / NBRC 100126 / VC-16).